Consider the following 179-residue polypeptide: Large ribosomal subunit protein uL5 (179 aa).

This sequence belongs to the universal ribosomal protein uL5 family. Part of the 50S ribosomal subunit; part of the 5S rRNA/L5/L18/L25 subcomplex. Contacts the 5S rRNA and the P site tRNA. Forms a bridge to the 30S subunit in the 70S ribosome.

Functionally, this is one of the proteins that bind and probably mediate the attachment of the 5S RNA into the large ribosomal subunit, where it forms part of the central protuberance. In the 70S ribosome it contacts protein S13 of the 30S subunit (bridge B1b), connecting the 2 subunits; this bridge is implicated in subunit movement. Contacts the P site tRNA; the 5S rRNA and some of its associated proteins might help stabilize positioning of ribosome-bound tRNAs. In Klebsiella pneumoniae (strain 342), this protein is Large ribosomal subunit protein uL5.